Here is a 926-residue protein sequence, read N- to C-terminus: Coatomer subunit beta'-2 (926 aa).

WD repeat units follow at residues 13 to 52, 55 to 94, 97 to 136, 140 to 180, 183 to 224, 227 to 266, 269 to 309, 351 to 390, and 461 to 501; these read QRSERVKSVDLHPTEPWILASLYSGTLCIWNYQTQVMAKS, VTELPVRSAKFVARKQWVVAGADDMYIRVYNYNTMDKVKV, AHSDYIRCVAVHPTLPYVLSSSDDMLIKLWDWEKGWACTQ, GHSH…PNFT, AHQK…CVQT, GHTHNVSAVCFHPELPIIITGSEDGTVRIWHATTYRLENT, YGLE…ASMD, TCDLYPQSLKHNPNGRFVVVCGDGEYIIYTALAWRNRSFG, and RIDV…SHFD. The disordered stretch occupies residues 847 to 926; sequence EEESLENGDM…GTNNEGNPSA (80 aa). Basic and acidic residues predominate over residues 868-887; sequence NEQRNEDDVAEHVEEHHEEK. Residues 888–900 show a composition bias toward acidic residues; sequence EAEEEEGIVDGDS. Over residues 917 to 926 the composition is skewed to polar residues; that stretch reads GTNNEGNPSA.

It belongs to the WD repeat COPB2 family. As to quaternary structure, oligomeric complex that consists of at least the alpha, beta, beta', gamma, delta, epsilon and zeta subunits.

It is found in the cytoplasm. The protein resides in the golgi apparatus membrane. It localises to the cytoplasmic vesicle. The protein localises to the COPI-coated vesicle membrane. Functionally, the coatomer is a cytosolic protein complex that binds to dilysine motifs and reversibly associates with Golgi non-clathrin-coated vesicles, which further mediate biosynthetic protein transport from the ER, via the Golgi up to the trans Golgi network. Coatomer complex is required for budding from Golgi membranes, and is essential for the retrograde Golgi-to-ER transport of dilysine-tagged proteins. This chain is Coatomer subunit beta'-2, found in Arabidopsis thaliana (Mouse-ear cress).